A 209-amino-acid polypeptide reads, in one-letter code: Glutathione S-transferase (209 aa).

A GST N-terminal domain is found at 7–91; the sequence is FFFFFFFFFS…YLSKKYNISG (85 aa). Residues 62–63, 75–76, Asp109, Lys121, and Thr125 contribute to the glutathione site; these read QV and QS. One can recognise a GST C-terminal domain in the interval 93–209; the sequence is GELNEFYADM…YIANRKESVY (117 aa).

This sequence belongs to the GST superfamily. As to quaternary structure, homodimer. In the absence of ligands two homodimers may interact to form a tetramer.

It catalyses the reaction RX + glutathione = an S-substituted glutathione + a halide anion + H(+). Conjugation of reduced glutathione to a wide number of exogenous and endogenous hydrophobic electrophiles. May also function as a storage protein or ligandin for parasitotoxic ferriprotoporphyrin IX (hemin). The protein is Glutathione S-transferase of Plasmodium yoelii yoelii.